Reading from the N-terminus, the 525-residue chain is GMP synthase [glutamine-hydrolyzing] (525 aa).

In terms of domain architecture, Glutamine amidotransferase type-1 spans Arg9 to Leu207. The active-site Nucleophile is Cys86. Catalysis depends on residues His181 and Glu183. Positions Trp208–Arg400 constitute a GMPS ATP-PPase domain. Ser235–Ser241 is a binding site for ATP.

As to quaternary structure, homodimer.

The catalysed reaction is XMP + L-glutamine + ATP + H2O = GMP + L-glutamate + AMP + diphosphate + 2 H(+). It participates in purine metabolism; GMP biosynthesis; GMP from XMP (L-Gln route): step 1/1. Catalyzes the synthesis of GMP from XMP. The chain is GMP synthase [glutamine-hydrolyzing] from Citrobacter koseri (strain ATCC BAA-895 / CDC 4225-83 / SGSC4696).